We begin with the raw amino-acid sequence, 1343 residues long: DNA-directed RNA polymerase subunit beta (1343 aa).

Belongs to the RNA polymerase beta chain family. As to quaternary structure, the RNAP catalytic core consists of 2 alpha, 1 beta, 1 beta' and 1 omega subunit. When a sigma factor is associated with the core the holoenzyme is formed, which can initiate transcription.

It carries out the reaction RNA(n) + a ribonucleoside 5'-triphosphate = RNA(n+1) + diphosphate. Functionally, DNA-dependent RNA polymerase catalyzes the transcription of DNA into RNA using the four ribonucleoside triphosphates as substrates. The polypeptide is DNA-directed RNA polymerase subunit beta (Haemophilus influenzae (strain PittGG)).